Reading from the N-terminus, the 233-residue chain is Small ribosomal subunit protein uS3 (233 aa).

The KH type-2 domain occupies I39 to R107. The segment covering M212–P222 has biased composition (basic and acidic residues). Residues M212 to K233 form a disordered region. Residues K224–K233 are compositionally biased toward basic residues.

Belongs to the universal ribosomal protein uS3 family. In terms of assembly, part of the 30S ribosomal subunit. Forms a tight complex with proteins S10 and S14.

In terms of biological role, binds the lower part of the 30S subunit head. Binds mRNA in the 70S ribosome, positioning it for translation. The sequence is that of Small ribosomal subunit protein uS3 from Campylobacter jejuni subsp. jejuni serotype O:6 (strain 81116 / NCTC 11828).